A 399-amino-acid chain; its full sequence is MMAGFAQTTITKINQFYERWMPRLPAEMTARNVLVFCVVCLLCIGSVMVASASMPYAEYMHENPFHYVVRHAISIATAAIVAYLVYKVPLNVWFKNTFSFWLITILLLLAVLVIGTEVNGSRRWIRLAGFTLQPTEVAKVMMAIFTADYVVRRAKEVRTHWKGLVRLSGVMAITVGLIIAEPDLGATVVIVLMMVGIFFLAGAPPTQFAIMLGAVVMGIGFLILFEPYRLARAMSFTNPWADPLGTGYQLSNALMAFGRGEWFGTGLGHSVQKLSYLPEAHTDFMLAVLGEEFGFVGISIVIGLSFIMLACCIKIGHRALKHNFLRAGYLAYGISIIFLLQIIVNAGMNMGLMPTKGLTLPFISYGGTSLMMCAAMISLILRIDASTQEINPDREESNF.

Over 1–32 the chain is Cytoplasmic; sequence MMAGFAQTTITKINQFYERWMPRLPAEMTARN. A helical transmembrane segment spans residues 33–53; the sequence is VLVFCVVCLLCIGSVMVASAS. The Periplasmic portion of the chain corresponds to 54-72; that stretch reads MPYAEYMHENPFHYVVRHA. Residues 73-93 traverse the membrane as a helical segment; sequence ISIATAAIVAYLVYKVPLNVW. Topologically, residues 94-97 are cytoplasmic; sequence FKNT. Residues 98-118 form a helical membrane-spanning segment; it reads FSFWLITILLLLAVLVIGTEV. Over 119–126 the chain is Periplasmic; that stretch reads NGSRRWIR. The chain crosses the membrane as a helical span at residues 127 to 147; sequence LAGFTLQPTEVAKVMMAIFTA. Residues 148 to 159 lie on the Cytoplasmic side of the membrane; that stretch reads DYVVRRAKEVRT. A helical transmembrane segment spans residues 160 to 180; the sequence is HWKGLVRLSGVMAITVGLIIA. At 181 to 183 the chain is on the periplasmic side; that stretch reads EPD. The helical transmembrane segment at 184-204 threads the bilayer; sequence LGATVVIVLMMVGIFFLAGAP. The Cytoplasmic portion of the chain corresponds to 205 to 207; it reads PTQ. A helical transmembrane segment spans residues 208 to 228; it reads FAIMLGAVVMGIGFLILFEPY. Topologically, residues 229-292 are periplasmic; it reads RLARAMSFTN…DFMLAVLGEE (64 aa). Residues 293–313 form a helical membrane-spanning segment; it reads FGFVGISIVIGLSFIMLACCI. Over 314 to 327 the chain is Cytoplasmic; sequence KIGHRALKHNFLRA. A helical transmembrane segment spans residues 328–348; sequence GYLAYGISIIFLLQIIVNAGM. At 349 to 359 the chain is on the periplasmic side; sequence NMGLMPTKGLT. The chain crosses the membrane as a helical span at residues 360–380; the sequence is LPFISYGGTSLMMCAAMISLI. Residues 381-399 lie on the Cytoplasmic side of the membrane; sequence LRIDASTQEINPDREESNF.

This sequence belongs to the SEDS family. FtsW subfamily.

The protein resides in the cell inner membrane. The enzyme catalyses [GlcNAc-(1-&gt;4)-Mur2Ac(oyl-L-Ala-gamma-D-Glu-L-Lys-D-Ala-D-Ala)](n)-di-trans,octa-cis-undecaprenyl diphosphate + beta-D-GlcNAc-(1-&gt;4)-Mur2Ac(oyl-L-Ala-gamma-D-Glu-L-Lys-D-Ala-D-Ala)-di-trans,octa-cis-undecaprenyl diphosphate = [GlcNAc-(1-&gt;4)-Mur2Ac(oyl-L-Ala-gamma-D-Glu-L-Lys-D-Ala-D-Ala)](n+1)-di-trans,octa-cis-undecaprenyl diphosphate + di-trans,octa-cis-undecaprenyl diphosphate + H(+). It participates in cell wall biogenesis; peptidoglycan biosynthesis. Functionally, peptidoglycan polymerase that is essential for cell division. This is Probable peptidoglycan glycosyltransferase FtsW from Acinetobacter baylyi (strain ATCC 33305 / BD413 / ADP1).